A 1033-amino-acid polypeptide reads, in one-letter code: Lethal(2) giant larvae protein homolog SRO7 (1033 aa).

A disordered region spans residues 16–45 (SLKGQNSETPIENSKASFKSKNSKTSTISK). The segment covering 18–27 (KGQNSETPIE) has biased composition (polar residues). The segment covering 28–45 (NSKASFKSKNSKTSTISK) has biased composition (low complexity). WD repeat units lie at residues 81–114 (IAAA…VVIK), 121–156 (IKEM…TTVF), 161–197 (ITSI…SFKL), 216–249 (SIQW…KQSF), 274–309 (VIQS…IMAR), 333–397 (KISK…MKIF), 405–440 (IVNI…ETML), 464–538 (ATTS…FEVN), 552–631 (DKIS…STAV), 638–673 (TSAI…YMEN), 685–736 (VTCI…DITN), 745–799 (KIDA…THKG), 804–851 (LAAT…MSEH), and 865–888 (SVLR…STVK). 2 positions are modified to phosphoserine: serine 591 and serine 602. The segment at 953–984 (SFSERSSDDNNANHPEHQYTKPTRKGRNSSYG) is disordered.

This sequence belongs to the WD repeat L(2)GL family. Interacts with MYO2 and SEC9.

It is found in the cytoplasm. Its subcellular location is the cell membrane. In terms of biological role, acts as an allosteric regulator of polarized exocytosis by promoting the targeted fusion of vesicles with the plasma membrane. Coordinates the spatial and temporal nature of both Rab-dependent tethering and SNARE-dependent membrane fusion of exocytic vesicles with the plasma membrane. Required for targeting of the sodium pumping ATPase ENA1 to the Cell Surface, thus being involved in maintenance of ion homeostasis in cells exposed to NaCl stress. May be involved in the targeting of the myosin proteins to their intrinsic pathways. Multicopy suppressor of RHO3. May also participate in the maintenance of cell polarity and bud growth. The sequence is that of Lethal(2) giant larvae protein homolog SRO7 (SRO7) from Saccharomyces cerevisiae (strain ATCC 204508 / S288c) (Baker's yeast).